A 108-amino-acid chain; its full sequence is Nucleoid-associated protein Bcen_6253 (108 aa).

Residues 85-95 show a composition bias toward polar residues; the sequence is ATSQEKMSGMT. The interval 85–108 is disordered; it reads ATSQEKMSGMTSGLPLPPGFKLPF. Pro residues predominate over residues 99–108; the sequence is PLPPGFKLPF.

Belongs to the YbaB/EbfC family. Homodimer.

Its subcellular location is the cytoplasm. It is found in the nucleoid. In terms of biological role, binds to DNA and alters its conformation. May be involved in regulation of gene expression, nucleoid organization and DNA protection. This Burkholderia orbicola (strain AU 1054) protein is Nucleoid-associated protein Bcen_6253.